Reading from the N-terminus, the 260-residue chain is Snake venom serine protease homolog KN4 (260 aa).

Residues 1-18 (MVLIRVLANLLILQLSYA) form the signal peptide. The propeptide occupies 19–24 (QKSSEL). Positions 25–251 (IIGGDECNIN…HLDWIQNIIA (227 aa)) constitute a Peptidase S1 domain. Cystine bridges form between Cys31/Cys165, Cys52/Cys68, Cys100/Cys258, Cys144/Cys212, Cys176/Cys191, and Cys202/Cys227. N-linked (GlcNAc...) asparagine glycosylation is found at Asn83, Asn123, Asn124, Asn156, and Asn172. Asn253 carries N-linked (GlcNAc...) asparagine glycosylation.

Belongs to the peptidase S1 family. Snake venom subfamily. As to expression, expressed by the venom gland.

The protein resides in the secreted. Snake venom serine protease homolog that may act in the hemostasis system of the prey. The chain is Snake venom serine protease homolog KN4 from Trimeresurus stejnegeri (Chinese green tree viper).